Reading from the N-terminus, the 434-residue chain is SPARC-related modular calcium-binding protein 1 (434 aa).

A signal peptide spans 1-26; it reads MLPARCARLLTPHLLLVLVQLSPARG. One can recognise a Kazal-like domain in the interval 37 to 89; sequence SDRDPQCNLHCSRTQPKPICASDGRSYESMCEYQRAKCRDPTLGVVHRGRCKD. Intrachain disulfides connect cysteine 43/cysteine 74, cysteine 47/cysteine 67, cysteine 56/cysteine 87, cysteine 95/cysteine 118, cysteine 129/cysteine 136, and cysteine 138/cysteine 158. Positions 92-158 constitute a Thyroglobulin type-1 1 domain; that stretch reads QSKCRLERAQ…SSVQNKTPVC (67 aa). The segment covering 149–172 has biased composition (polar residues); that stretch reads SSVQNKTPVCSGSVTDKPLSQGNS. The segment at 149 to 191 is disordered; sequence SSVQNKTPVCSGSVTDKPLSQGNSGRKDDGSKPTPTMETQPVF. The N-linked (GlcNAc...) asparagine glycan is linked to asparagine 214. The Thyroglobulin type-1 2 domain maps to 224 to 292; sequence VYSCDQERQS…TSTRYVMPSC (69 aa). Intrachain disulfides connect cysteine 227/cysteine 251, cysteine 262/cysteine 269, and cysteine 271/cysteine 292. EF-hand domains are found at residues 359–394 and 396–431; these read LEER…VKKK and KPKK…SKEG. Residues aspartate 372, asparagine 374, serine 376, aspartate 378, glutamate 383, aspartate 409, asparagine 411, aspartate 413, and glutamate 420 each contribute to the Ca(2+) site. Asparagine 374 is a glycosylation site (N-linked (GlcNAc...) asparagine).

Glycosylated. As to expression, widely expressed in many tissues with a strongest signal in ovary. No expression in spleen.

The protein localises to the secreted. The protein resides in the extracellular space. It is found in the extracellular matrix. Its subcellular location is the basement membrane. Its function is as follows. Plays essential roles in both eye and limb development. Probable regulator of osteoblast differentiation. In Homo sapiens (Human), this protein is SPARC-related modular calcium-binding protein 1 (SMOC1).